Reading from the N-terminus, the 464-residue chain is Argininosuccinate lyase (464 aa).

It belongs to the lyase 1 family. Argininosuccinate lyase subfamily.

It is found in the cytoplasm. The enzyme catalyses 2-(N(omega)-L-arginino)succinate = fumarate + L-arginine. It functions in the pathway amino-acid biosynthesis; L-arginine biosynthesis; L-arginine from L-ornithine and carbamoyl phosphate: step 3/3. The sequence is that of Argininosuccinate lyase from Pseudomonas entomophila (strain L48).